A 369-amino-acid chain; its full sequence is UDP-3-O-acylglucosamine N-acyltransferase (369 aa).

The Proton acceptor role is filled by H263.

The protein belongs to the transferase hexapeptide repeat family. LpxD subfamily. Homotrimer.

It catalyses the reaction a UDP-3-O-[(3R)-3-hydroxyacyl]-alpha-D-glucosamine + a (3R)-hydroxyacyl-[ACP] = a UDP-2-N,3-O-bis[(3R)-3-hydroxyacyl]-alpha-D-glucosamine + holo-[ACP] + H(+). It participates in bacterial outer membrane biogenesis; LPS lipid A biosynthesis. Functionally, catalyzes the N-acylation of UDP-3-O-acylglucosamine using 3-hydroxyacyl-ACP as the acyl donor. Is involved in the biosynthesis of lipid A, a phosphorylated glycolipid that anchors the lipopolysaccharide to the outer membrane of the cell. The polypeptide is UDP-3-O-acylglucosamine N-acyltransferase (Burkholderia ambifaria (strain MC40-6)).